Reading from the N-terminus, the 272-residue chain is Putative MgpC-like protein MPN_102 (272 aa).

The protein belongs to the MgpC family.

The chain is Putative MgpC-like protein MPN_102 from Mycoplasma pneumoniae (strain ATCC 29342 / M129 / Subtype 1) (Mycoplasmoides pneumoniae).